We begin with the raw amino-acid sequence, 395 residues long: 1-deoxy-D-xylulose 5-phosphate reductoisomerase (395 aa).

NADPH-binding residues include T15, G16, S17, I18, G41, N43, and N126. K127 contacts 1-deoxy-D-xylulose 5-phosphate. E128 is a binding site for NADPH. A Mn(2+)-binding site is contributed by D152. 1-deoxy-D-xylulose 5-phosphate is bound by residues S153, E154, S178, and H201. Residue E154 coordinates Mn(2+). G207 contacts NADPH. 1-deoxy-D-xylulose 5-phosphate is bound by residues S214, N219, K220, and E223. A Mn(2+)-binding site is contributed by E223.

This sequence belongs to the DXR family. It depends on Mg(2+) as a cofactor. The cofactor is Mn(2+).

The enzyme catalyses 2-C-methyl-D-erythritol 4-phosphate + NADP(+) = 1-deoxy-D-xylulose 5-phosphate + NADPH + H(+). The protein operates within isoprenoid biosynthesis; isopentenyl diphosphate biosynthesis via DXP pathway; isopentenyl diphosphate from 1-deoxy-D-xylulose 5-phosphate: step 1/6. Its function is as follows. Catalyzes the NADPH-dependent rearrangement and reduction of 1-deoxy-D-xylulose-5-phosphate (DXP) to 2-C-methyl-D-erythritol 4-phosphate (MEP). The sequence is that of 1-deoxy-D-xylulose 5-phosphate reductoisomerase from Ruegeria pomeroyi (strain ATCC 700808 / DSM 15171 / DSS-3) (Silicibacter pomeroyi).